Consider the following 130-residue polypeptide: DUF35 domain-containing scaffold protein (130 aa).

Residues Cys-20, Cys-23, Cys-34, and Cys-37 each contribute to the Zn(2+) site.

Belongs to the scaffold protein DUF35 family. In terms of assembly, interacts with acetoacetyl-CoA thiolase and HMG-CoA synthase (HMGCS) that catalyzes the first and second step in the mevalonate pathway, respectively.

Functions as a scaffold to connect the acetoacetyl-CoA thiolase and HMG-CoA synthase (HMGCS) dimers in the channeling thiolase/HMGCS complex, which allows for efficient coupling of the endergonic thiolase reaction with the exergonic HMGCS reaction. In Methanothermococcus thermolithotrophicus (Methanococcus thermolithotrophicus), this protein is DUF35 domain-containing scaffold protein.